The primary structure comprises 372 residues: GTPase Obg (372 aa).

The Obg domain occupies methionine 1 to leucine 159. Residues leucine 128–glycine 147 are disordered. An OBG-type G domain is found at alanine 160–valine 334. GTP contacts are provided by residues glycine 166–serine 173, phenylalanine 191–alanine 195, aspartate 213–glycine 216, asparagine 284–aspartate 287, and serine 315–leucine 317. Positions 173 and 193 each coordinate Mg(2+).

This sequence belongs to the TRAFAC class OBG-HflX-like GTPase superfamily. OBG GTPase family. Monomer. Mg(2+) serves as cofactor.

It is found in the cytoplasm. Functionally, an essential GTPase which binds GTP, GDP and possibly (p)ppGpp with moderate affinity, with high nucleotide exchange rates and a fairly low GTP hydrolysis rate. Plays a role in control of the cell cycle, stress response, ribosome biogenesis and in those bacteria that undergo differentiation, in morphogenesis control. This is GTPase Obg from Burkholderia pseudomallei (strain 668).